The sequence spans 328 residues: Protein chibby homolog 2 (328 aa).

The segment at 180–231 is disordered; sequence NKGASSVQKDTENTTAAGEGSLGPTCQEEHDAKEESTTPTQNDTKIAPSTED. The span at 182-195 shows a compositional bias: polar residues; that stretch reads GASSVQKDTENTTA. Basic and acidic residues predominate over residues 206-215; sequence QEEHDAKEES. Positions 259-307 form a coiled coil; that stretch reads RESLHALQDESKFFQEEYKKLKLQLNNVKNTVSDITTQMEMLEKELIAI.

The protein belongs to the chibby family. SPERT subfamily.

The protein is Protein chibby homolog 2 (CBY2) of Gallus gallus (Chicken).